Here is a 182-residue protein sequence, read N- to C-terminus: UPF0690 protein C1orf52 (182 aa).

2 disordered regions span residues 1–67 (MAAE…RSVT) and 100–182 (WKSN…KKKK). Over residues 23–32 (SDEEDNIEPE) the composition is skewed to acidic residues. Positions 50–63 (NKAEKRLPGPDELF) are enriched in basic and acidic residues. Phosphothreonine is present on threonine 67. Residue tyrosine 132 is modified to Phosphotyrosine. The segment covering 151 to 162 (EGEETLESDDEK) has biased composition (acidic residues). Phosphoserine is present on serine 158. Residues 172-182 (VEPGEPAKKKK) show a composition bias toward basic and acidic residues.

This sequence belongs to the UPF0690 family. As to expression, expressed in all tissues tested including heart, placenta, liver, skeletal muscle, kidney and pancreas. Weak expression in brain and lung.

This Homo sapiens (Human) protein is UPF0690 protein C1orf52 (C1orf52).